Here is a 72-residue protein sequence, read N- to C-terminus: Translation initiation factor IF-1 (72 aa).

In terms of domain architecture, S1-like spans 1-72 (MAKEEAIEIE…TKGRITYRYK (72 aa)).

This sequence belongs to the IF-1 family. In terms of assembly, component of the 30S ribosomal translation pre-initiation complex which assembles on the 30S ribosome in the order IF-2 and IF-3, IF-1 and N-formylmethionyl-tRNA(fMet); mRNA recruitment can occur at any time during PIC assembly.

The protein resides in the cytoplasm. In terms of biological role, one of the essential components for the initiation of protein synthesis. Stabilizes the binding of IF-2 and IF-3 on the 30S subunit to which N-formylmethionyl-tRNA(fMet) subsequently binds. Helps modulate mRNA selection, yielding the 30S pre-initiation complex (PIC). Upon addition of the 50S ribosomal subunit IF-1, IF-2 and IF-3 are released leaving the mature 70S translation initiation complex. The protein is Translation initiation factor IF-1 of Chlorobium phaeobacteroides (strain DSM 266 / SMG 266 / 2430).